Reading from the N-terminus, the 153-residue chain is SsrA-binding protein (153 aa).

It belongs to the SmpB family.

It localises to the cytoplasm. Functionally, required for rescue of stalled ribosomes mediated by trans-translation. Binds to transfer-messenger RNA (tmRNA), required for stable association of tmRNA with ribosomes. tmRNA and SmpB together mimic tRNA shape, replacing the anticodon stem-loop with SmpB. tmRNA is encoded by the ssrA gene; the 2 termini fold to resemble tRNA(Ala) and it encodes a 'tag peptide', a short internal open reading frame. During trans-translation Ala-aminoacylated tmRNA acts like a tRNA, entering the A-site of stalled ribosomes, displacing the stalled mRNA. The ribosome then switches to translate the ORF on the tmRNA; the nascent peptide is terminated with the 'tag peptide' encoded by the tmRNA and targeted for degradation. The ribosome is freed to recommence translation, which seems to be the essential function of trans-translation. The protein is SsrA-binding protein of Orientia tsutsugamushi (strain Ikeda) (Rickettsia tsutsugamushi).